We begin with the raw amino-acid sequence, 174 residues long: ATP synthase subunit d, mitochondrial (174 aa).

S2 carries the post-translational modification N-acetylserine.

The protein belongs to the ATPase d subunit family.

The protein resides in the mitochondrion inner membrane. Its function is as follows. Mitochondrial membrane ATP synthase (F(1)F(0) ATP synthase or Complex V) produces ATP from ADP in the presence of a proton gradient across the membrane which is generated by electron transport complexes of the respiratory chain. F-type ATPases consist of two structural domains, F(1) - containing the extramembraneous catalytic core, and F(0) - containing the membrane proton channel, linked together by a central stalk and a peripheral stalk. During catalysis, ATP synthesis in the catalytic domain of F(1) is coupled via a rotary mechanism of the central stalk subunits to proton translocation. Part of the complex F(0) domain and the peripheric stalk, which acts as a stator to hold the catalytic alpha(3)beta(3) subcomplex and subunit a/ATP6 static relative to the rotary elements. The protein is ATP synthase subunit d, mitochondrial (ATP7) of Kluyveromyces lactis (strain ATCC 8585 / CBS 2359 / DSM 70799 / NBRC 1267 / NRRL Y-1140 / WM37) (Yeast).